The chain runs to 403 residues: Phosphoglycerate kinase (403 aa).

Substrate contacts are provided by residues 21–23 (DFN), Arg36, 59–62 (HVGR), Arg119, and Arg154. ATP is bound by residues Lys207, Gly299, Glu330, and 357–360 (GGDA).

This sequence belongs to the phosphoglycerate kinase family. As to quaternary structure, monomer.

The protein resides in the cytoplasm. The enzyme catalyses (2R)-3-phosphoglycerate + ATP = (2R)-3-phospho-glyceroyl phosphate + ADP. The protein operates within carbohydrate degradation; glycolysis; pyruvate from D-glyceraldehyde 3-phosphate: step 2/5. This chain is Phosphoglycerate kinase (pgk), found in Chlamydia trachomatis serovar D (strain ATCC VR-885 / DSM 19411 / UW-3/Cx).